Reading from the N-terminus, the 113-residue chain is Protein RALF-like 31 (113 aa).

An N-terminal signal peptide occupies residues 1–21; that stretch reads MFNSTALVIFAILFLLISADA. A propeptide spans 22–58 (removed in mature form); the sequence is FPIPSPNGEIDAMLIRNSIIGEDEDLMPTEISRRVLM. Intrachain disulfides connect cysteine 76/cysteine 86 and cysteine 98/cysteine 104.

The protein belongs to the plant rapid alkalinization factor (RALF) family. Proteolytically cleaved, probably by S1P, a subtilisin-like serine protease (subtilase).

It localises to the secreted. Functionally, cell signaling peptide that may regulate plant stress, growth, and development. Mediates a rapid alkalinization of extracellular space by mediating a transient increase in the cytoplasmic Ca(2+) concentration leading to a calcium-dependent signaling events through a cell surface receptor and a concomitant activation of some intracellular mitogen-activated protein kinases. This is Protein RALF-like 31 (RALFL31) from Arabidopsis thaliana (Mouse-ear cress).